Here is a 317-residue protein sequence, read N- to C-terminus: Transaldolase (317 aa).

K132 (schiff-base intermediate with substrate) is an active-site residue.

Belongs to the transaldolase family. Type 1 subfamily. Homodimer.

It localises to the cytoplasm. The catalysed reaction is D-sedoheptulose 7-phosphate + D-glyceraldehyde 3-phosphate = D-erythrose 4-phosphate + beta-D-fructose 6-phosphate. It participates in carbohydrate degradation; pentose phosphate pathway; D-glyceraldehyde 3-phosphate and beta-D-fructose 6-phosphate from D-ribose 5-phosphate and D-xylulose 5-phosphate (non-oxidative stage): step 2/3. In terms of biological role, transaldolase is important for the balance of metabolites in the pentose-phosphate pathway. The polypeptide is Transaldolase (Photorhabdus laumondii subsp. laumondii (strain DSM 15139 / CIP 105565 / TT01) (Photorhabdus luminescens subsp. laumondii)).